The sequence spans 83 residues: Ardiscretin (83 aa).

A signal peptide spans methionine 1–serine 20. The LCN-type CS-alpha/beta domain maps to lysine 21–glycine 82. Cystine bridges form between cysteine 31-cysteine 81, cysteine 35-cysteine 57, cysteine 43-cysteine 62, and cysteine 47-cysteine 64. Cysteine 81 bears the Cysteine amide mark.

Expressed by the venom gland.

The protein localises to the secreted. In terms of biological role, inhibits the sodium (Nav) currents in an apparent irreversible manner. Produces small depolarization and induces repetitive firing in squid axons. Is specific for arthropods (crickets, triatomides, crabs and squids), but is non-toxic to mice. Shows antibacterial activity against both Gram-positive and Gram-negative bacteria. This chain is Ardiscretin, found in Tityus discrepans (Venezuelan scorpion).